The chain runs to 78 residues: D-alanyl carrier protein (78 aa).

The 78-residue stretch at M1–Q78 folds into the Carrier domain. S36 carries the post-translational modification O-(pantetheine 4'-phosphoryl)serine.

Belongs to the DltC family. Post-translationally, 4'-phosphopantetheine is transferred from CoA to a specific serine of apo-DCP.

The protein resides in the cytoplasm. The protein operates within cell wall biogenesis; lipoteichoic acid biosynthesis. Its function is as follows. Carrier protein involved in the D-alanylation of lipoteichoic acid (LTA). The loading of thioester-linked D-alanine onto DltC is catalyzed by D-alanine--D-alanyl carrier protein ligase DltA. The DltC-carried D-alanyl group is further transferred to cell membrane phosphatidylglycerol (PG) by forming an ester bond, probably catalyzed by DltD. D-alanylation of LTA plays an important role in modulating the properties of the cell wall in Gram-positive bacteria, influencing the net charge of the cell wall. The protein is D-alanyl carrier protein of Latilactobacillus sakei subsp. sakei (strain 23K) (Lactobacillus sakei subsp. sakei).